We begin with the raw amino-acid sequence, 349 residues long: GDP-mannose:glycolipid 4-beta-D-mannosyltransferase (349 aa).

The N-terminal stretch at 1 to 14 (MSASASLPVTRAAA) is a signal peptide.

This sequence belongs to the glycosyltransferase 94 family.

The protein localises to the cell inner membrane. It catalyses the reaction beta-D-GlcA-(1-&gt;2)-alpha-D-Man-(1-&gt;3)-beta-D-Glc-(1-&gt;4)-alpha-D-Glc-di-trans,octa-cis-undecaprenyl diphosphate + GDP-alpha-D-mannose = beta-D-Man-(1-&gt;4)-beta-D-GlcA-(1-&gt;2)-alpha-D-Man-(1-&gt;3)-beta-D-Glc-(1-&gt;4)-alpha-D-Glc-di-trans,octa-cis-undecaprenyl diphosphate + GDP + H(+). It participates in glycan biosynthesis; xanthan biosynthesis. Its function is as follows. Nonprocessive beta-mannosyltransferase that catalyzes the transfer of a mannose residue from GDP-mannose to glucuronic acid-beta-1,2-mannose-alpha-1,3-glucose-beta-1,4-glucose-PP-polyisoprenyl to form the lipid-linked pentasaccharide repeating unit of xanthan, Man-GlcA-Man-Glc(2)-PP-Pol. Is involved in the biosynthesis of the exopolysaccharide xanthan. To a lesser extent, can also use ADP-Man and even GDP-Glc as sugar donor substrates in vitro. Is unable to transfer a Man residue to the free-tetrasaccharide GlcA-Man-Glc(2) used as an acceptor, which indicates that the diphosphate group and the lipid moiety in the acceptor substrate are of major importance for acceptor binding and catalysis. The chain is GDP-mannose:glycolipid 4-beta-D-mannosyltransferase (gumI) from Xanthomonas campestris pv. campestris.